The chain runs to 47 residues: MSEKKLNQEEFLKILMHAHEIGEQSSEMTTKEMLENLISHIKNGYAT.

This is an uncharacterized protein from Bacillus subtilis (strain 168).